Consider the following 420-residue polypeptide: Nucleoporin NUP42 (420 aa).

The segment at 1–25 (MTICQFFLQGRCRFGDRCWNEHPGA) adopts a C3H1-type zinc-finger fold. The stretch at 14 to 15 (FG) is one FG 1 repeat. The segment at 25–111 (ARGAGGARQP…FASPLSDEQK (87 aa)) is disordered. Residues 42–67 (SGNNRRGWNASSQRYSNVIQPSSFPK) are compositionally biased toward polar residues. 10 FG repeats span residues 82-83 (FG), 95-96 (FG), 218-219 (FG), 220-221 (FG), 228-229 (FG), 265-266 (FG), 271-272 (FG), 288-289 (FG), 345-346 (FG), and 364-365 (FG). The segment covering 87–102 (SGASTSRGFGSSQNPF) has biased composition (polar residues). Residues 323-345 (MAASPSGSTTAPPLRSGSSVVGF) form a disordered region. Residues 365 to 420 (GGSGISTSVLASGAADNALFTPRDQLMKEELEQFQSQRFTLGKIPLKPPPVELLTV) form an interaction with GLE1 region.

As to quaternary structure, probable component of the nuclear pore complex (NPC). Interacts with nuclear export protein NXF1. Interacts with GLE1. Able to form a heterotrimer with NUP155 and GLE1 in vitro. Interacts with XPO1. In terms of processing, O-glycosylated.

The protein resides in the nucleus. It is found in the nuclear pore complex. It localises to the nucleus membrane. Required for the export of mRNAs containing poly(A) tails from the nucleus into the cytoplasm. This Mus musculus (Mouse) protein is Nucleoporin NUP42 (Nup42).